We begin with the raw amino-acid sequence, 157 residues long: 6,7-dimethyl-8-ribityllumazine synthase (157 aa).

5-amino-6-(D-ribitylamino)uracil-binding positions include F22, 57 to 59 (AYE), and 81 to 83 (TVI). 86-87 (GT) lines the (2S)-2-hydroxy-3-oxobutyl phosphate pocket. Residue H89 is the Proton donor of the active site. A 5-amino-6-(D-ribitylamino)uracil-binding site is contributed by F114. R128 is a binding site for (2S)-2-hydroxy-3-oxobutyl phosphate.

The protein belongs to the DMRL synthase family. As to quaternary structure, forms an icosahedral capsid composed of 60 subunits, arranged as a dodecamer of pentamers.

It carries out the reaction (2S)-2-hydroxy-3-oxobutyl phosphate + 5-amino-6-(D-ribitylamino)uracil = 6,7-dimethyl-8-(1-D-ribityl)lumazine + phosphate + 2 H2O + H(+). It functions in the pathway cofactor biosynthesis; riboflavin biosynthesis; riboflavin from 2-hydroxy-3-oxobutyl phosphate and 5-amino-6-(D-ribitylamino)uracil: step 1/2. In terms of biological role, catalyzes the formation of 6,7-dimethyl-8-ribityllumazine by condensation of 5-amino-6-(D-ribitylamino)uracil with 3,4-dihydroxy-2-butanone 4-phosphate. This is the penultimate step in the biosynthesis of riboflavin. The sequence is that of 6,7-dimethyl-8-ribityllumazine synthase from Histophilus somni (strain 129Pt) (Haemophilus somnus).